The sequence spans 196 residues: Carnitine operon protein CaiE (196 aa).

Residues 173 to 196 (TQPLRQMEENRPRLQGTTDVTPKR) are disordered. Over residues 187 to 196 (QGTTDVTPKR) the composition is skewed to polar residues.

Belongs to the transferase hexapeptide repeat family.

The protein operates within amine and polyamine metabolism; carnitine metabolism. Functionally, overproduction of CaiE stimulates the activity of CaiB and CaiD. The sequence is that of Carnitine operon protein CaiE from Shigella dysenteriae serotype 1 (strain Sd197).